Reading from the N-terminus, the 203-residue chain is VPS4-associated protein 1 (203 aa).

Positions 99-109 are enriched in basic and acidic residues; the sequence is EKETNNSKDPD. Disordered stretches follow at residues 99-125 and 171-193; these read EKET…AKND and QVNR…EELL. Residues 110 to 120 are compositionally biased toward low complexity; it reads PTTTDSTDTSP. Residues 121-157 adopt a coiled-coil conformation; that stretch reads QAKNDAEILSETKKQYSKILDKVTELQRKNRKYELAK. Over residues 171–182 the composition is skewed to basic and acidic residues; sequence QVNRERYLKEQE.

In terms of assembly, interacts with VPS4.

The protein localises to the cytoplasm. Its subcellular location is the endosome. In terms of biological role, VPS4-associated protein involved in trafficking to the vacuole. The polypeptide is VPS4-associated protein 1 (VFA1) (Saccharomyces cerevisiae (strain ATCC 204508 / S288c) (Baker's yeast)).